We begin with the raw amino-acid sequence, 525 residues long: MAVPHPSSSSSRSHPFLSHVYHTSFHHHHHHNHPSLVLFWCLVFSLLSPLALSSSSSSSSSSSDSSSSSSSHISLGIGETEGTKHDLHQAILRDEAVARLHELGQVSDAATHLERTFMSPASIRAIPLIRGWMEDAGLSTWVDYMGNVHGRVEPKNGSSQALLIGSHMDTVIDAGKYDGSLGIISAISALKVLKIDGRLGELKRPVEVIAFSDEEGVRFQSTFLGSAALAGIMPVSRLEVTDKSGISVQDALKENSIDITDENLMQLKYDPASVWGYVEVHIEQGPVLEWVGYPLGVVKGIAGQTRLKVTVKGSQGHAGTVPMSMRQDPMTGAAELIVLLESVCKNPKDYLSCNVQCNEDTVESLANSLVCTVGEISTWPSASNVIPGQVTFTVDLRTIDDVGRKAILHDLSTRMYQICDKRSLLCSIERKHDADAVMSDPQLSLQLKSAAQSALKKMTGEVQDEVPVLMSGAGHDAMAMAHLTKVGMLFVRCRGGISHSPAEHVLDDDVGAAGLAILEFLESQM.

An N-terminal signal peptide occupies residues 1–53 (MAVPHPSSSSSRSHPFLSHVYHTSFHHHHHHNHPSLVLFWCLVFSLLSPLALS). Positions 56-75 (SSSSSSSSDSSSSSSSHISL) are enriched in low complexity. Residues 56 to 78 (SSSSSSSSDSSSSSSSHISLGIG) form a disordered region. N-linked (GlcNAc...) asparagine glycosylation is present at Asn156. Positions 167, 178, 215, 281, and 499 each coordinate Mn(2+).

Belongs to the peptidase M20A family. Homodimer. Mn(2+) serves as cofactor. Expressed in seedlings, roots, stems, leaves, flowers, siliques and seeds.

It localises to the endoplasmic reticulum. The enzyme catalyses allantoate + H2O + 2 H(+) = (S)-2-ureidoglycine + NH4(+) + CO2. With respect to regulation, inhibited by borate, fluoride, L-Asn and L-Asp, but not by phenylphosphorodiamidate. Functionally, involved in the catabolism of purine nucleotides. Can use allantoate as substrate, but not Nalpha-carbamoyl-L-Asp, Nalpha-carbamoyl-L-Ala or Nalpha-carbamoyl-Gly. The sequential activity of AAH, UGLYAH and UAH allows a complete purine breakdown without the intermediate generation of urea. Involved in the regulation of seed maturation and seed dormancy. The sequence is that of Allantoate deiminase from Arabidopsis thaliana (Mouse-ear cress).